The following is a 227-amino-acid chain: Flagellar L-ring protein (227 aa).

The N-terminal stretch at 1–16 (MRNIILFAAGTLLLSG) is a signal peptide. Cys17 is lipidated: N-palmitoyl cysteine. Residue Cys17 is the site of S-diacylglycerol cysteine attachment.

This sequence belongs to the FlgH family. In terms of assembly, the basal body constitutes a major portion of the flagellar organelle and consists of four rings (L,P,S, and M) mounted on a central rod.

It localises to the cell outer membrane. The protein resides in the bacterial flagellum basal body. Functionally, assembles around the rod to form the L-ring and probably protects the motor/basal body from shearing forces during rotation. The protein is Flagellar L-ring protein of Pseudoalteromonas translucida (strain TAC 125).